Reading from the N-terminus, the 210-residue chain is Orotate phosphoribosyltransferase (210 aa).

Residues Arg-97, Lys-101, His-103, and 123–131 (EDLISTGGS) contribute to the 5-phospho-alpha-D-ribose 1-diphosphate site. Ser-127 contributes to the orotate binding site.

The protein belongs to the purine/pyrimidine phosphoribosyltransferase family. PyrE subfamily. Homodimer. Mg(2+) serves as cofactor.

The catalysed reaction is orotidine 5'-phosphate + diphosphate = orotate + 5-phospho-alpha-D-ribose 1-diphosphate. The protein operates within pyrimidine metabolism; UMP biosynthesis via de novo pathway; UMP from orotate: step 1/2. In terms of biological role, catalyzes the transfer of a ribosyl phosphate group from 5-phosphoribose 1-diphosphate to orotate, leading to the formation of orotidine monophosphate (OMP). This chain is Orotate phosphoribosyltransferase, found in Enterococcus faecalis (strain ATCC 700802 / V583).